The following is a 342-amino-acid chain: N-acetyl-gamma-glutamyl-phosphate reductase (342 aa).

Cys146 is a catalytic residue.

Belongs to the NAGSA dehydrogenase family. Type 1 subfamily.

It localises to the cytoplasm. It catalyses the reaction N-acetyl-L-glutamate 5-semialdehyde + phosphate + NADP(+) = N-acetyl-L-glutamyl 5-phosphate + NADPH + H(+). The protein operates within amino-acid biosynthesis; L-arginine biosynthesis; N(2)-acetyl-L-ornithine from L-glutamate: step 3/4. Its function is as follows. Catalyzes the NADPH-dependent reduction of N-acetyl-5-glutamyl phosphate to yield N-acetyl-L-glutamate 5-semialdehyde. The polypeptide is N-acetyl-gamma-glutamyl-phosphate reductase (Streptomyces coelicolor (strain ATCC BAA-471 / A3(2) / M145)).